Reading from the N-terminus, the 250-residue chain is Global transcriptional regulator CodY (250 aa).

Residues 1–147 (MSTLLEKTRK…GATVVGLEIL (147 aa)) form a GAF domain region. Positions 195–214 (ASKIADKVGITRSVIVNALR) form a DNA-binding region, H-T-H motif.

Belongs to the CodY family.

Its subcellular location is the cytoplasm. Its function is as follows. DNA-binding global transcriptional regulator which is involved in the adaptive response to starvation and acts by directly or indirectly controlling the expression of numerous genes in response to nutrient availability. During rapid exponential growth, CodY is highly active and represses genes whose products allow adaptation to nutrient depletion. The sequence is that of Global transcriptional regulator CodY from Thermoanaerobacter sp. (strain X514).